Reading from the N-terminus, the 129-residue chain is Probable cytochrome b5 2 (129 aa).

Residues 3-79 (EKTITVEEVL…LEKFYIGNLL (77 aa)) form the Cytochrome b5 heme-binding domain. Heme is bound by residues His38 and His62. A helical membrane pass occupies residues 105-125 (VKPAMWLFVLVMVVAYFAFRK).

It belongs to the cytochrome b5 family.

The protein resides in the endoplasmic reticulum membrane. It is found in the microsome membrane. It localises to the mitochondrion. Its function is as follows. Membrane bound hemoprotein which function as an electron carrier for several membrane bound oxygenases. This is Probable cytochrome b5 2 (oca8) from Schizosaccharomyces pombe (strain 972 / ATCC 24843) (Fission yeast).